Reading from the N-terminus, the 681-residue chain is Terpene synthase 6, chloroplastic (681 aa).

Residues D433, D437, N577, and E585 each coordinate Mg(2+). A DDXXD motif motif is present at residues 433-437 (DDLFD).

This sequence belongs to the terpene synthase family. Mg(2+) serves as cofactor. In terms of tissue distribution, expressed in leaves.

Its subcellular location is the plastid. It localises to the chloroplast. The protein operates within secondary metabolite biosynthesis; terpenoid biosynthesis. Its function is as follows. May be involved in the biosynthesis of ent-kaurene diterpenoids natural products such as oridonin, miltiradiene, eriocalyxin B and nezukol, known to exhibit antitumor, anti-inflammatory and antibacterial activities. The polypeptide is Terpene synthase 6, chloroplastic (Isodon rubescens (Rabdosia rubescens)).